Here is a 581-residue protein sequence, read N- to C-terminus: Kelch-like protein 38 (581 aa).

The BTB domain maps to 34–101 (TDVSICSGAW…VYTGEVHISA (68 aa)). The region spanning 136 to 237 (CLGLVRLAEI…HPAFFHHFIA (102 aa)) is the BACK domain. 6 Kelch repeats span residues 285-332 (FLLL…TLHR), 334-383 (VYVL…THRN), 384-431 (FIFS…VKDQ), 433-479 (LYLF…VLGE), 480-521 (QIVI…VMGN), and 523-573 (LYVT…TLQC).

The protein is Kelch-like protein 38 (Klhl38) of Mus musculus (Mouse).